The primary structure comprises 227 residues: Cytochrome c oxidase subunit 2 (227 aa).

The Mitochondrial intermembrane portion of the chain corresponds to 1 to 14; the sequence is MAYPFQLGLQDATS. Residues 15–45 form a helical membrane-spanning segment; the sequence is PIMEELTNFHDHTLMIVFLISTLVLYIISLM. The Mitochondrial matrix portion of the chain corresponds to 46–59; that stretch reads LTTKLTHTSTMDAQ. The chain crosses the membrane as a helical span at residues 60 to 87; it reads EVETIWTILPAVILILIALPSLRILYMM. Over 88–227 the chain is Mitochondrial intermembrane; sequence DEINNPALTV…YFEDWSASMI (140 aa). Cu cation contacts are provided by His161, Cys196, Glu198, Cys200, His204, and Met207. Residue Glu198 coordinates Mg(2+). Residue Tyr218 is modified to Phosphotyrosine.

The protein belongs to the cytochrome c oxidase subunit 2 family. As to quaternary structure, component of the cytochrome c oxidase (complex IV, CIV), a multisubunit enzyme composed of 14 subunits. The complex is composed of a catalytic core of 3 subunits MT-CO1, MT-CO2 and MT-CO3, encoded in the mitochondrial DNA, and 11 supernumerary subunits COX4I, COX5A, COX5B, COX6A, COX6B, COX6C, COX7A, COX7B, COX7C, COX8 and NDUFA4, which are encoded in the nuclear genome. The complex exists as a monomer or a dimer and forms supercomplexes (SCs) in the inner mitochondrial membrane with NADH-ubiquinone oxidoreductase (complex I, CI) and ubiquinol-cytochrome c oxidoreductase (cytochrome b-c1 complex, complex III, CIII), resulting in different assemblies (supercomplex SCI(1)III(2)IV(1) and megacomplex MCI(2)III(2)IV(2)). Found in a complex with TMEM177, COA6, COX18, COX20, SCO1 and SCO2. Interacts with TMEM177 in a COX20-dependent manner. Interacts with COX20. Interacts with COX16. Cu cation is required as a cofactor.

It is found in the mitochondrion inner membrane. It carries out the reaction 4 Fe(II)-[cytochrome c] + O2 + 8 H(+)(in) = 4 Fe(III)-[cytochrome c] + 2 H2O + 4 H(+)(out). Functionally, component of the cytochrome c oxidase, the last enzyme in the mitochondrial electron transport chain which drives oxidative phosphorylation. The respiratory chain contains 3 multisubunit complexes succinate dehydrogenase (complex II, CII), ubiquinol-cytochrome c oxidoreductase (cytochrome b-c1 complex, complex III, CIII) and cytochrome c oxidase (complex IV, CIV), that cooperate to transfer electrons derived from NADH and succinate to molecular oxygen, creating an electrochemical gradient over the inner membrane that drives transmembrane transport and the ATP synthase. Cytochrome c oxidase is the component of the respiratory chain that catalyzes the reduction of oxygen to water. Electrons originating from reduced cytochrome c in the intermembrane space (IMS) are transferred via the dinuclear copper A center (CU(A)) of subunit 2 and heme A of subunit 1 to the active site in subunit 1, a binuclear center (BNC) formed by heme A3 and copper B (CU(B)). The BNC reduces molecular oxygen to 2 water molecules using 4 electrons from cytochrome c in the IMS and 4 protons from the mitochondrial matrix. In Hybomys univittatus (Peter's striped mouse), this protein is Cytochrome c oxidase subunit 2 (MT-CO2).